The primary structure comprises 116 residues: Vesicle-associated membrane protein 2 (116 aa).

The segment at 1-33 (MSATAATAPPAAPAGEGGPPAPPPNLTSNRRLQ) is disordered. S2 carries the post-translational modification N-acetylserine. Residues 2-94 (SATAATAPPA…KRKYWWKNLK (93 aa)) are Cytoplasmic-facing. Residues 31–91 (RLQQTQAQVD…AKLKRKYWWK (61 aa)) form the v-SNARE coiled-coil homology domain. The required for interaction with SEPT8 stretch occupies residues 92 to 116 (NLKMMIILGVICAIILIIIIVYFSS). A helical; Anchor for type IV membrane protein transmembrane segment spans residues 95 to 114 (MMIILGVICAIILIIIIVYF). Topologically, residues 115-116 (SS) are vesicular.

The protein belongs to the synaptobrevin family. As to quaternary structure, part of the SNARE core complex containing SNAP25, VAMP2 and STX1A; this complex constitutes the basic catalytic machinery of the complex neurotransmitter release apparatus. Recruited to the SNARE complex following binding of the SNARE complex component STX1A to STXBP1. This complex binds to CPLX1. Interacts with POPDC1 and STX4. Interacts with VAPA and VAPB. Interacts with WDFY2, PRKCZ and PRKCI. Forms a complex with WDFY2 and PRKCZ. Interacts (via N-terminus) with KCNB1 (via N-terminus and C-terminus); stimulates the channel inactivation rate of KCNB1. Interacts with SEPT8; the interaction inhibits interaction of VAMP2 with SYP. Interacts with SYP; the interaction is inhibited by interaction with SEPT8. Interacts with PICALM. Interacts with alpha-synuclein/SNCA. Interacts with STX3. Post-translationally, phosphorylated by PRKCZ in vitro and this phosphorylation is increased in the presence of WDFY2.

The protein localises to the cytoplasmic vesicle. Its subcellular location is the secretory vesicle. It localises to the synaptic vesicle membrane. The protein resides in the cell membrane. Functionally, involved in the targeting and/or fusion of transport vesicles to their target membrane. Major SNARE protein of synaptic vesicles which mediates fusion of synaptic vesicles to release neurotransmitters. Essential for fast vesicular exocytosis and activity-dependent neurotransmitter release as well as fast endocytosis that mediates rapid reuse of synaptic vesicles. Modulates the gating characteristics of the delayed rectifier voltage-dependent potassium channel KCNB1. The sequence is that of Vesicle-associated membrane protein 2 (VAMP2) from Bos taurus (Bovine).